We begin with the raw amino-acid sequence, 381 residues long: Chymosin (381 aa).

Residues 1–16 form the signal peptide; sequence MRCLVVLLAVFALSQG. A propeptide spans 17 to 58 (activation peptide); it reads AEITRIPLYKGKPLRKALKERGLLEDFLQKQQYGVSSEYSGF. Residues 74–378 form the Peptidase A1 domain; it reads YFGKIYLGTP…DRANNLVGLA (305 aa). Asp-92 is a catalytic residue. 2 cysteine pairs are disulfide-bonded: Cys-105–Cys-110 and Cys-265–Cys-269. The active site involves Asp-274. A disulfide bridge links Cys-308 with Cys-341.

Belongs to the peptidase A1 family. As to quaternary structure, monomer.

The catalysed reaction is Broad specificity similar to that of pepsin A. Clots milk by cleavage of a single 104-Ser-Phe-|-Met-Ala-107 bond in kappa-chain of casein.. Its function is as follows. Chymosin is synthesized in the mucosa of the stomach. The enzyme hydrolyzes casein to paracasein. This Ovis aries (Sheep) protein is Chymosin (CYM).